A 492-amino-acid polypeptide reads, in one-letter code: Cytochrome P450 26A1 (492 aa).

C437 provides a ligand contact to heme.

Belongs to the cytochrome P450 family. It depends on heme as a cofactor.

Its subcellular location is the endoplasmic reticulum membrane. The protein resides in the microsome membrane. The enzyme catalyses all-trans-retinoate + reduced [NADPH--hemoprotein reductase] + O2 = all-trans-(4S)-hydroxyretinoate + oxidized [NADPH--hemoprotein reductase] + H2O + H(+). It catalyses the reaction all-trans-(4S)-hydroxyretinoate + reduced [NADPH--hemoprotein reductase] + O2 = all-trans-(4S,16)-dihydroxyretinoate + oxidized [NADPH--hemoprotein reductase] + H2O + H(+). The catalysed reaction is all-trans-retinoate + reduced [NADPH--hemoprotein reductase] + O2 = all-trans-18-hydroxyretinoate + oxidized [NADPH--hemoprotein reductase] + H2O + H(+). Functionally, a cytochrome P450 monooxygenase involved in the metabolism of retinoates (RAs), the active metabolites of vitamin A, and critical signaling molecules in animals. RAs exist as at least four different isomers: all-trans-RA (atRA), 9-cis-RA, 13-cis-RA, and 9,13-dicis-RA, where atRA is considered to be the biologically active isomer, although 9-cis-RA and 13-cis-RA also have activity. Catalyzes the hydroxylation of atRA primarily at C-4 and C-18, thereby contributing to the regulation of atRA homeostasis and signaling. Hydroxylation of atRA limits its biological activity and initiates a degradative process leading to its eventual elimination. Involved in the convertion of atRA to all-trans-4-oxo-RA. Able to metabolize other RAs such as 9-cis, 13-cis and 9,13-di-cis RA. Can oxidize all-trans-13,14-dihydroretinoate (DRA) to metabolites which could include all-trans-4-oxo-DRA, all-trans-4-hydroxy-DRA, all-trans-5,8-epoxy-DRA, and all-trans-18-hydroxy-DRA. May play a role in the oxidative metabolism of xenobiotics such as tazarotenic acid. The protein is Cytochrome P450 26A1 (CYP26A1) of Gallus gallus (Chicken).